The sequence spans 957 residues: MTQTLSQLENSGAFIERHIGPDAAQQQEMLNAVGAQSLNALTGQIVPKDIQLATPPQVGAPATEYAALAELKAIASRNKRFTSYIGMGYTAVQLPPVILRNMLENPGWYTAYTPYQPEVSQGRLEALLNFQQVTLDLTGLDMASASLLDEATAAAEAMAMAKRVSKLKNANRFFVASDVHPQTLDVVRTRAETFGFEVIVDDAQKVLDHQDIFGVLLQQVGTTGEIHDYTALISELKSRKIVVSVAADIMALVLLTAPGKQGADIVFGSAQRFGVPMGYGGPHAAFFAAKDEYKRSMPGRIIGVSKDAAGNTALRMAMQTREQHIRREKANSNICTSQVLLANIASLYAVYHGPIGLKRIANRIHRLTDILAAGLQQKGLKLRHAHYFDTLCVEVADKAGVLARAEAAEINLRSDILNAVGITLDETTTRENVMQLFSVLLGDNHGLDIDTLDKDVAHDSRSIQPAMLRDDEILTHPVFNRYHSETEMMRYMHSLERKDLALNQAMIPLGSCTMKLNAAAEMIPITWPEFAELHPFCPPEQAEGYQQMIAQLADWLVKLTGYDAVCMQPNSGAQGEYAGLLAIRHYHESRNEGHRDICLIPASAHGTNPASAHMAGMQVVVVACDKNGNIDLTDLRAKAEQAGDNLSCIMVTYPSTHGVYEETIREVCEVVHQFGGQVYLDGANMNAQVGITSPGFIGADVSHLNLHKTFCIPHGGGGPGMGPIGVKAHLAPFVPGHSVVQIEGMLTRQGAVSAAPFGSASILPISWMYIRMMGAEGLKKASQVAILNANYIASRLQDAFPVLYTGRDGRVAHECILDIRPLKEETGISELDIAKRLIDYGFHAPTMSFPVAGTLMVEPTESESKVELDRFIDAMLAIRAEIDQVKAGVWPLEDNPLVNAPHIQSELVAEWAHPYSREVAVFPAGVADKYWPTVKRLDDVYGDRNLFCSCVPISEYQ.

At Lys708 the chain carries N6-(pyridoxal phosphate)lysine.

Belongs to the GcvP family. In terms of assembly, the glycine cleavage system is composed of four proteins: P, T, L and H. Pyridoxal 5'-phosphate serves as cofactor.

The enzyme catalyses N(6)-[(R)-lipoyl]-L-lysyl-[glycine-cleavage complex H protein] + glycine + H(+) = N(6)-[(R)-S(8)-aminomethyldihydrolipoyl]-L-lysyl-[glycine-cleavage complex H protein] + CO2. Functionally, the glycine cleavage system catalyzes the degradation of glycine. The P protein binds the alpha-amino group of glycine through its pyridoxal phosphate cofactor; CO(2) is released and the remaining methylamine moiety is then transferred to the lipoamide cofactor of the H protein. The polypeptide is Glycine dehydrogenase (decarboxylating) (Escherichia coli O157:H7).